A 451-amino-acid polypeptide reads, in one-letter code: Phosphoglucosamine mutase (451 aa).

The active-site Phosphoserine intermediate is the S102. S102, D243, D245, and D247 together coordinate Mg(2+). S102 is modified (phosphoserine).

Belongs to the phosphohexose mutase family. Mg(2+) serves as cofactor. Post-translationally, activated by phosphorylation.

The enzyme catalyses alpha-D-glucosamine 1-phosphate = D-glucosamine 6-phosphate. Functionally, catalyzes the conversion of glucosamine-6-phosphate to glucosamine-1-phosphate. The protein is Phosphoglucosamine mutase of Salinispora arenicola (strain CNS-205).